The primary structure comprises 155 residues: Ribosomal RNA large subunit methyltransferase H (155 aa).

S-adenosyl-L-methionine-binding positions include L72, G103, and 122–127 (LSPLTL).

This sequence belongs to the RNA methyltransferase RlmH family. Homodimer.

The protein localises to the cytoplasm. It catalyses the reaction pseudouridine(1915) in 23S rRNA + S-adenosyl-L-methionine = N(3)-methylpseudouridine(1915) in 23S rRNA + S-adenosyl-L-homocysteine + H(+). Specifically methylates the pseudouridine at position 1915 (m3Psi1915) in 23S rRNA. The polypeptide is Ribosomal RNA large subunit methyltransferase H (Aeromonas salmonicida (strain A449)).